Consider the following 396-residue polypeptide: Elongation factor Tu (396 aa).

Residues 10-206 (KPHVNIGTIG…AVDESVPDPV (197 aa)) form the tr-type G domain. Residues 19 to 26 (GHVDHGKT) are G1. 19 to 26 (GHVDHGKT) provides a ligand contact to GTP. Thr-26 provides a ligand contact to Mg(2+). Residues 62–66 (GITIN) are G2. The interval 83–86 (DAPG) is G3. GTP-binding positions include 83–87 (DAPGH) and 138–141 (NKAD). The tract at residues 138–141 (NKAD) is G4. A G5 region spans residues 176-178 (SGL).

This sequence belongs to the TRAFAC class translation factor GTPase superfamily. Classic translation factor GTPase family. EF-Tu/EF-1A subfamily. Monomer.

The protein resides in the cytoplasm. The catalysed reaction is GTP + H2O = GDP + phosphate + H(+). Its function is as follows. GTP hydrolase that promotes the GTP-dependent binding of aminoacyl-tRNA to the A-site of ribosomes during protein biosynthesis. This is Elongation factor Tu from Arthrobacter sp. (strain FB24).